We begin with the raw amino-acid sequence, 267 residues long: tRNA (guanine-N(1)-)-methyltransferase (267 aa).

S-adenosyl-L-methionine is bound by residues glycine 119 and 139–144 (IGDYVL).

The protein belongs to the RNA methyltransferase TrmD family. In terms of assembly, homodimer.

The protein resides in the cytoplasm. The enzyme catalyses guanosine(37) in tRNA + S-adenosyl-L-methionine = N(1)-methylguanosine(37) in tRNA + S-adenosyl-L-homocysteine + H(+). Specifically methylates guanosine-37 in various tRNAs. This is tRNA (guanine-N(1)-)-methyltransferase from Chromohalobacter salexigens (strain ATCC BAA-138 / DSM 3043 / CIP 106854 / NCIMB 13768 / 1H11).